The following is a 442-amino-acid chain: SPRY domain-containing protein 3 (442 aa).

The 188-residue stretch at Asp17–Gly204 folds into the B30.2/SPRY domain. Residues Glu371–Gly394 are disordered. Residues Gly372 to Pro390 show a composition bias toward acidic residues.

The protein is SPRY domain-containing protein 3 (SPRYD3) of Pongo abelii (Sumatran orangutan).